A 419-amino-acid polypeptide reads, in one-letter code: L-rhamnose isomerase (419 aa).

Residues histidine 262, aspartate 294, and aspartate 296 each coordinate Mn(2+).

This sequence belongs to the rhamnose isomerase family. As to quaternary structure, homotetramer. Requires Mn(2+) as cofactor.

It localises to the cytoplasm. The enzyme catalyses L-rhamnopyranose = L-rhamnulose. It functions in the pathway carbohydrate degradation; L-rhamnose degradation; glycerone phosphate from L-rhamnose: step 1/3. Its function is as follows. Catalyzes the interconversion of L-rhamnose and L-rhamnulose. In Enterobacter sp. (strain 638), this protein is L-rhamnose isomerase.